A 105-amino-acid chain; its full sequence is Met repressor (105 aa).

The protein belongs to the MetJ family. Homodimer.

Its subcellular location is the cytoplasm. This regulatory protein, when combined with SAM (S-adenosylmethionine) represses the expression of the methionine regulon and of enzymes involved in SAM synthesis. This is Met repressor from Erwinia tasmaniensis (strain DSM 17950 / CFBP 7177 / CIP 109463 / NCPPB 4357 / Et1/99).